The primary structure comprises 213 residues: THAP domain-containing protein 1 (213 aa).

The THAP-type zinc-finger motif lies at 1 to 81 (MVQSCSAYGC…LKENAVPTIF (81 aa)). The HCFC1-binding motif (HBM) motif lies at 134-137 (DHNY). An involved in homodimer formation region spans residues 139–185 (VEDTMHQRKRIHQLEQQVEKLRKKLKTAQQRCRRQERQLEKLKEVVH). Positions 139–190 (VEDTMHQRKRIHQLEQQVEKLRKKLKTAQQRCRRQERQLEKLKEVVHFQKEK) form a coiled coil.

It belongs to the THAP1 family. As to quaternary structure, homodimer. Interacts with PAWR. Component of a THAP1/THAP3-HCFC1-OGT complex that contains, either THAP1 or THAP3, HCFC1 and OGT. Interacts with OGT. Interacts (via the HBM) with HCFC1 (via the Kelch-repeat domain); the interaction recruits HCFC1 to the RRM1 promoter. Highly expressed in heart, skeletal muscle, kidney and liver. Weaker expression in brain and placenta.

The protein resides in the nucleus. Its subcellular location is the nucleoplasm. It is found in the PML body. DNA-binding transcription regulator that regulates endothelial cell proliferation and G1/S cell-cycle progression. Specifically binds the 5'-[AT]NTNN[GT]GGCA[AGT]-3' core DNA sequence and acts by modulating expression of pRB-E2F cell-cycle target genes, including RRM1. Component of a THAP1/THAP3-HCFC1-OGT complex that is required for the regulation of the transcriptional activity of RRM1. May also have pro-apoptotic activity by potentiating both serum-withdrawal and TNF-induced apoptosis. This Homo sapiens (Human) protein is THAP domain-containing protein 1 (THAP1).